A 983-amino-acid polypeptide reads, in one-letter code: Seizure protein 6 homolog (983 aa).

A signal peptide spans 1-19 (MRPAALLLLPSLLALLVHG). Disordered stretches follow at residues 80 to 132 (GQEK…WSLE) and 148 to 194 (PGMA…QTTG). Residues 101-112 (NQDSRPVFTSPT) are compositionally biased toward polar residues. The span at 154–167 (TPGPGERPNTPPPS) shows a compositional bias: pro residues. N-linked (GlcNAc...) asparagine glycosylation is present at Asn278. Positions 344-403 (LSCHFPRRPAYGAVTVTSLHPGGSARFRCATGYQLKGARLLTCLNATQPFWDSQEPVCIA) constitute a Sushi 1 domain. 12 cysteine pairs are disulfide-bonded: Cys346–Cys386, Cys372–Cys401, Cys405–Cys432, Cys521–Cys563, Cys548–Cys578, Cys582–Cys608, Cys699–Cys741, Cys727–Cys754, Cys760–Cys802, Cys788–Cys819, Cys827–Cys869, and Cys855–Cys884. Residues Asn388, Asn425, and Asn530 are each glycosylated (N-linked (GlcNAc...) asparagine). In terms of domain architecture, CUB 1 spans 405-516 (CGGVIRNATT…AGMALRYEAF (112 aa)). In terms of domain architecture, Sushi 2 spans 519–580 (GHCYEPFVKY…WNETEPACRA (62 aa)). Residues 582-693 (CSGETTDSAG…QGFVIHFFEV (112 aa)) form the CUB 2 domain. 3 Sushi domains span residues 697–756 (DTCP…SCQR), 758–821 (TSCL…KCLL), and 825–886 (KPCH…ICRA). The chain crosses the membrane as a helical span at residues 915-935 (LAAAIFLPLVAMALLVGGVYL).

Belongs to the SEZ6 family.

The protein resides in the cell membrane. Functionally, may play a role in cell-cell recognition and in neuronal membrane signaling. Seems to be important for the achievement of the necessary balance between dendrite elongation and branching during the elaboration of a complex dendritic arbor. Involved in the development of appropriate excitatory synaptic connectivity. This chain is Seizure protein 6 homolog (SEZ6), found in Bos taurus (Bovine).